A 408-amino-acid polypeptide reads, in one-letter code: Diguanylate cyclase DgcN (408 aa).

The Cytoplasmic portion of the chain corresponds to 1–24; sequence MMDNDNSLNKRPTFKRALRNISMT. The helical transmembrane segment at 25 to 45 threads the bilayer; that stretch reads SIFITMMLIWLLLSVTSVLTL. The Periplasmic portion of the chain corresponds to 46-52; that stretch reads KQYAQKN. The helical transmembrane segment at 53 to 73 threads the bilayer; the sequence is LALTAATMTYSLEAAVVFADG. The Cytoplasmic segment spans residues 74 to 112; the sequence is PAATETLAALGQQGQFSTAEVRDKQQNILASWHYTRKDP. Residues 113-133 form a helical membrane-spanning segment; sequence GDTFSNFISHWLFPAPIIQPI. Over 134 to 154 the chain is Periplasmic; the sequence is RHNGETIGEVRLTARDSSISH. A helical transmembrane segment spans residues 155–175; the sequence is FIWFSLAVLTGCILLASGIAI. The Cytoplasmic portion of the chain corresponds to 176–408; it reads TLTRHLHNGL…KHQRAEKLVR (233 aa). An HAMP domain is found at 183–236; sequence NGLVEALKNITDVVHDVRSNRNFSRRVSEERIAEFHRFALDFNSLLDEMEEWQL. Positions 278 to 408 constitute a GGDEF domain; sequence KTSALLFLDG…KHQRAEKLVR (131 aa). D286 lines the Mg(2+) pocket. Residues N294, H299, and D303 each coordinate substrate. D329 contributes to the Mg(2+) binding site. D329 acts as the Proton acceptor in catalysis.

In terms of assembly, homodimer. Interacts with the cell division proteins FtsZ and ZipA. Mg(2+) serves as cofactor.

The protein localises to the cell inner membrane. The catalysed reaction is 2 GTP = 3',3'-c-di-GMP + 2 diphosphate. The protein operates within purine metabolism; 3',5'-cyclic di-GMP biosynthesis. Inhibited by YfiR, which prevents relocation to the midcell. A reductive stress signal is required to inactivate YfiR and turn on the DGC activity of DgcN. Bifunctional protein that catalyzes the synthesis of cyclic-di-GMP (c-di-GMP) in response to reductive stress and then dynamically relocates to the division site to arrest cell division in response to envelope stress. In the presence of high intracellular c-di-GMP levels, and in response to envelope stress, interacts with cell division proteins and halts cell division, without disassembling the Z ring, but by blocking its further progress toward cytokinesis. Part of a network that regulates cell motility by altering levels of c-di-GMP. The sequence is that of Diguanylate cyclase DgcN from Escherichia coli (strain K12).